Reading from the N-terminus, the 181-residue chain is 6,7-dimethyl-8-ribityllumazine synthase (181 aa).

Residues F23, S61–E63, and A85–I87 each bind 5-amino-6-(D-ribitylamino)uracil. Residue Q90–T91 coordinates (2S)-2-hydroxy-3-oxobutyl phosphate. H93 acts as the Proton donor in catalysis. F118 is a 5-amino-6-(D-ribitylamino)uracil binding site. A (2S)-2-hydroxy-3-oxobutyl phosphate-binding site is contributed by R132.

The protein belongs to the DMRL synthase family.

It carries out the reaction (2S)-2-hydroxy-3-oxobutyl phosphate + 5-amino-6-(D-ribitylamino)uracil = 6,7-dimethyl-8-(1-D-ribityl)lumazine + phosphate + 2 H2O + H(+). The protein operates within cofactor biosynthesis; riboflavin biosynthesis; riboflavin from 2-hydroxy-3-oxobutyl phosphate and 5-amino-6-(D-ribitylamino)uracil: step 1/2. Catalyzes the formation of 6,7-dimethyl-8-ribityllumazine by condensation of 5-amino-6-(D-ribitylamino)uracil with 3,4-dihydroxy-2-butanone 4-phosphate. This is the penultimate step in the biosynthesis of riboflavin. This Synechococcus elongatus (strain ATCC 33912 / PCC 7942 / FACHB-805) (Anacystis nidulans R2) protein is 6,7-dimethyl-8-ribityllumazine synthase.